The following is a 527-amino-acid chain: Peptide chain release factor 3 (527 aa).

In terms of domain architecture, tr-type G spans 9 to 277 (AKRRTFAIIS…AVVDWAPRPL (269 aa)). GTP-binding positions include 18-25 (SHPDAGKT), 86-90 (DTPGH), and 140-143 (NKLD).

This sequence belongs to the TRAFAC class translation factor GTPase superfamily. Classic translation factor GTPase family. PrfC subfamily.

The protein localises to the cytoplasm. Its function is as follows. Increases the formation of ribosomal termination complexes and stimulates activities of RF-1 and RF-2. It binds guanine nucleotides and has strong preference for UGA stop codons. It may interact directly with the ribosome. The stimulation of RF-1 and RF-2 is significantly reduced by GTP and GDP, but not by GMP. The protein is Peptide chain release factor 3 of Pseudomonas fluorescens (strain Pf0-1).